A 178-amino-acid polypeptide reads, in one-letter code: Large ribosomal subunit protein uL6 (178 aa).

The protein belongs to the universal ribosomal protein uL6 family. In terms of assembly, part of the 50S ribosomal subunit.

Its function is as follows. This protein binds to the 23S rRNA, and is important in its secondary structure. It is located near the subunit interface in the base of the L7/L12 stalk, and near the tRNA binding site of the peptidyltransferase center. This is Large ribosomal subunit protein uL6 from Natranaerobius thermophilus (strain ATCC BAA-1301 / DSM 18059 / JW/NM-WN-LF).